The following is a 62-amino-acid chain: MDQRMNGVDPKMLELLVCPLTNGRLTLNRENNELVSEKARLAYPIRDGIPIMLVSEARKIED.

The protein belongs to the UPF0434 family.

The polypeptide is UPF0434 protein Avi_4243 (Allorhizobium ampelinum (strain ATCC BAA-846 / DSM 112012 / S4) (Agrobacterium vitis (strain S4))).